Here is a 121-residue protein sequence, read N- to C-terminus: Large ribosomal subunit protein eL18 (121 aa).

Belongs to the eukaryotic ribosomal protein eL18 family.

This Methanosphaerula palustris (strain ATCC BAA-1556 / DSM 19958 / E1-9c) protein is Large ribosomal subunit protein eL18.